The following is a 345-amino-acid chain: Holliday junction branch migration complex subunit RuvB (345 aa).

The tract at residues 1 to 183 (MTTQRLVSAA…FGIVHRLEFY (183 aa)) is large ATPase domain (RuvB-L). Residues Ile-22, Arg-23, Gly-64, Lys-67, Thr-68, Thr-69, 130-132 (EDY), Arg-173, Tyr-183, and Arg-220 contribute to the ATP site. Residue Thr-68 participates in Mg(2+) binding. Residues 184-254 (SVEELSRIVA…VAGKALEMLD (71 aa)) form a small ATPAse domain (RuvB-S) region. The segment at 257–345 (PNGFDQSDRR…NVNEELFGDE (89 aa)) is head domain (RuvB-H). DNA contacts are provided by Arg-293, Arg-312, and Arg-317.

The protein belongs to the RuvB family. In terms of assembly, homohexamer. Forms an RuvA(8)-RuvB(12)-Holliday junction (HJ) complex. HJ DNA is sandwiched between 2 RuvA tetramers; dsDNA enters through RuvA and exits via RuvB. An RuvB hexamer assembles on each DNA strand where it exits the tetramer. Each RuvB hexamer is contacted by two RuvA subunits (via domain III) on 2 adjacent RuvB subunits; this complex drives branch migration. In the full resolvosome a probable DNA-RuvA(4)-RuvB(12)-RuvC(2) complex forms which resolves the HJ.

It is found in the cytoplasm. It catalyses the reaction ATP + H2O = ADP + phosphate + H(+). Its function is as follows. The RuvA-RuvB-RuvC complex processes Holliday junction (HJ) DNA during genetic recombination and DNA repair, while the RuvA-RuvB complex plays an important role in the rescue of blocked DNA replication forks via replication fork reversal (RFR). RuvA specifically binds to HJ cruciform DNA, conferring on it an open structure. The RuvB hexamer acts as an ATP-dependent pump, pulling dsDNA into and through the RuvAB complex. RuvB forms 2 homohexamers on either side of HJ DNA bound by 1 or 2 RuvA tetramers; 4 subunits per hexamer contact DNA at a time. Coordinated motions by a converter formed by DNA-disengaged RuvB subunits stimulates ATP hydrolysis and nucleotide exchange. Immobilization of the converter enables RuvB to convert the ATP-contained energy into a lever motion, pulling 2 nucleotides of DNA out of the RuvA tetramer per ATP hydrolyzed, thus driving DNA branch migration. The RuvB motors rotate together with the DNA substrate, which together with the progressing nucleotide cycle form the mechanistic basis for DNA recombination by continuous HJ branch migration. Branch migration allows RuvC to scan DNA until it finds its consensus sequence, where it cleaves and resolves cruciform DNA. The protein is Holliday junction branch migration complex subunit RuvB of Methylococcus capsulatus (strain ATCC 33009 / NCIMB 11132 / Bath).